The primary structure comprises 632 residues: Cytoplasmic polyadenylation element-binding protein 3 (632 aa).

Residues 1–11 (MQDDLLMDKSK) show a composition bias toward basic and acidic residues. 2 disordered regions span residues 1–89 (MQDD…TGGS) and 127–212 (FSPQ…RRAV). The span at 13 to 48 (QQRQQPQQPPSSQTQQQQKEAASVAEPPSSRESSPP) shows a compositional bias: low complexity. Polar residues-rich tracts occupy residues 65 to 89 (SFQQEPPTTPSLSPSFGSTWSTGGS) and 135 to 169 (HQTQQQQRRSPASPNNHTAYTQRNAYSHQPILTNK). Residues 170-193 (PSSSPNSSSPSPSNWNNQQNAAWN) are compositionally biased toward low complexity. 2 RRM domains span residues 375-466 (RKVF…PWNL) and 483-565 (KTIF…PYVL).

The protein belongs to the RRM CPEB family. In terms of assembly, following synaptic activity, forms amyloid-like oligomers. Aggregation requires an intact actin cytoskeleton. As to expression, in embryos, expressed in the central nervous system, and intermediate and distal pronephric tubule segments of the embryonic kidney.

Its subcellular location is the cytoplasm. The protein resides in the nucleus. It is found in the synapse. The protein localises to the cell projection. It localises to the dendrite. Its subcellular location is the postsynaptic density. Sequence-specific RNA-binding protein which acts as a translational repressor in the basal unstimulated state but, following neuronal stimulation, acts as a translational activator. Does not bind to the cytoplasmic polyadenylation element (CPE), a uridine-rich sequence element within the mRNA 3'-UTR, but binds to a U-rich loop within a stem-loop structure. Required for the consolidation and maintenance of hippocampal-based long term memory. Inhibits differentiation of intermediate mesoderm from an early stage to inhibit pronephric differentiation but induce neural differentiation. This Xenopus tropicalis (Western clawed frog) protein is Cytoplasmic polyadenylation element-binding protein 3 (cpeb3).